A 240-amino-acid polypeptide reads, in one-letter code: Sugar fermentation stimulation protein homolog (240 aa).

Belongs to the SfsA family.

The protein is Sugar fermentation stimulation protein homolog of Saccharolobus islandicus (strain M.14.25 / Kamchatka #1) (Sulfolobus islandicus).